The chain runs to 317 residues: MSLRDDLTINERDPLLSSFDQRQEYNTSNNTYKVNNNSNEPSVLTLYNSDELGTSQRSSYQKFVRRSQEFKMQHREFLAEFIGTLILVLLTCGFCAEQTLNIEKSKSWLTSSLGSGLSVLIGICVAGHVSGGHLNPAITIAFWVFSGFPIRKVPMYITAQLLGAFSGAALLYSIVEPAISQFDHGKRQILGELGTAGIFGTYPPLYVGTGSAVASEVVGTAMLLLVVMVTGHPNNLPFRTAQGAMIALGVTTISLCIGYTSGFSLNPARDFGPRLFTAVAGWGIDVFTVHHYYALVPMFAPILGGLAGGFIYTVFID.

The Cytoplasmic segment spans residues 1 to 75; that stretch reads MSLRDDLTIN…RSQEFKMQHR (75 aa). The helical transmembrane segment at 76-96 threads the bilayer; that stretch reads EFLAEFIGTLILVLLTCGFCA. Residues 97–108 are Extracellular-facing; sequence EQTLNIEKSKSW. A helical membrane pass occupies residues 109 to 129; it reads LTSSLGSGLSVLIGICVAGHV. The Cytoplasmic segment spans residues 130-154; the sequence is SGGHLNPAITIAFWVFSGFPIRKVP. The NPA 1 motif lies at 135-137; it reads NPA. Residues 155 to 175 form a helical membrane-spanning segment; it reads MYITAQLLGAFSGAALLYSIV. The Extracellular portion of the chain corresponds to 176–208; sequence EPAISQFDHGKRQILGELGTAGIFGTYPPLYVG. A helical membrane pass occupies residues 209–229; the sequence is TGSAVASEVVGTAMLLLVVMV. Residues 230–242 lie on the Cytoplasmic side of the membrane; that stretch reads TGHPNNLPFRTAQ. A helical membrane pass occupies residues 243–263; the sequence is GAMIALGVTTISLCIGYTSGF. Residues 264-295 are Extracellular-facing; that stretch reads SLNPARDFGPRLFTAVAGWGIDVFTVHHYYAL. Residues 266–268 carry the NPA 2 motif; it reads NPA. Residues 296–316 traverse the membrane as a helical segment; the sequence is VPMFAPILGGLAGGFIYTVFI. Residue Asp-317 is a topological domain, cytoplasmic.

This sequence belongs to the MIP/aquaporin (TC 1.A.8) family.

Its subcellular location is the cell membrane. The enzyme catalyses H2O(in) = H2O(out). It carries out the reaction glycerol(in) = glycerol(out). In terms of biological role, water channel required to facilitate the transport of water across membranes. Contributes to water uptake of spores during the early stages of spore germination. Aquaporins AQP1 and AQP2 act as extracellular pH sensors and enable the spores to hydrate under favorable conditions and to commence germination. Wounded vegetables and fruit present acidic pH, so the optimal pH range for germination is adapted to the relevant host pH. This chain is Aquaporin-2, found in Rhizopus delemar (strain RA 99-880 / ATCC MYA-4621 / FGSC 9543 / NRRL 43880) (Mucormycosis agent).